The primary structure comprises 31 residues: Cliotide T13 (31 aa).

The segment at residues 1 to 31 (DTTPCGESCVWIPCVSSIVGCSCQNKVCYQN) is a cross-link (cyclopeptide (Asp-Asn)). Cystine bridges form between C5–C21, C9–C23, and C14–C28.

Post-translationally, contains 3 disulfide bonds. This is a cyclic peptide. In terms of tissue distribution, expressed in seed but not in root nodules.

Probably participates in a plant defense mechanism. Not active against Gram-negative bacterium E.coli ATCC 700926 or Gram-positive bacterium S.aureus ATCC 12600 up to a concentration of 100 uM under low-salt conditions. This is Cliotide T13 from Clitoria ternatea (Butterfly pea).